A 343-amino-acid chain; its full sequence is Aspartate beta-hydroxylase domain-containing protein 2 (343 aa).

The Cytoplasmic segment spans residues 1-31; that stretch reads MWLEWLVAWSWSLDGLRDCIATGIQSVRDCD. Residues 32–52 form a helical membrane-spanning segment; it reads GTAVITVACLLVLFVWYCYHV. At 53–343 the chain is on the lumenal side; that stretch reads GREQPRPHVS…ALDFIFAPGR (291 aa). 2 N-linked (GlcNAc...) asparagine glycosylation sites follow: Asn77 and Asn185. 2 residues coordinate 2-oxoglutarate: Trp202 and Ser246. Fe cation is bound at residue His257. Residue 266–268 participates in 2-oxoglutarate binding; sequence RCH. His302 contacts Fe cation. Arg315 lines the 2-oxoglutarate pocket.

This sequence belongs to the aspartyl/asparaginyl beta-hydroxylase family. Requires Fe cation as cofactor.

Its subcellular location is the membrane. May function as 2-oxoglutarate-dependent dioxygenase. This chain is Aspartate beta-hydroxylase domain-containing protein 2 (Asphd2), found in Rattus norvegicus (Rat).